We begin with the raw amino-acid sequence, 212 residues long: Proteasome subunit beta 2 (212 aa).

A propeptide spans 1–13 (removed in mature form; by autocatalysis); the sequence is MSVDEKVARALKG. Thr-14 serves as the catalytic Nucleophile.

Belongs to the peptidase T1B family. As to quaternary structure, the 20S proteasome core is composed of 14 alpha and 14 beta subunits that assemble into four stacked heptameric rings, resulting in a barrel-shaped structure. The two inner rings, each composed of seven catalytic beta subunits, are sandwiched by two outer rings, each composed of seven alpha subunits. The catalytic chamber with the active sites is on the inside of the barrel. Has a gated structure, the ends of the cylinder being occluded by the N-termini of the alpha-subunits. Is capped at one or both ends by the proteasome regulatory ATPase, PAN.

Its subcellular location is the cytoplasm. It carries out the reaction Cleavage of peptide bonds with very broad specificity.. With respect to regulation, the formation of the proteasomal ATPase PAN-20S proteasome complex, via the docking of the C-termini of PAN into the intersubunit pockets in the alpha-rings, triggers opening of the gate for substrate entry. Interconversion between the open-gate and close-gate conformations leads to a dynamic regulation of the 20S proteasome proteolysis activity. Functionally, component of the proteasome core, a large protease complex with broad specificity involved in protein degradation. This Ignicoccus hospitalis (strain KIN4/I / DSM 18386 / JCM 14125) protein is Proteasome subunit beta 2.